The primary structure comprises 257 residues: Hydroxyacylglutathione hydrolase (257 aa).

Residues His54, His56, Asp58, His59, His113, Asp137, and His175 each coordinate Zn(2+).

Belongs to the metallo-beta-lactamase superfamily. Glyoxalase II family. In terms of assembly, monomer. It depends on Zn(2+) as a cofactor.

The enzyme catalyses an S-(2-hydroxyacyl)glutathione + H2O = a 2-hydroxy carboxylate + glutathione + H(+). The protein operates within secondary metabolite metabolism; methylglyoxal degradation; (R)-lactate from methylglyoxal: step 2/2. Thiolesterase that catalyzes the hydrolysis of S-D-lactoyl-glutathione to form glutathione and D-lactic acid. This is Hydroxyacylglutathione hydrolase from Nostoc sp. (strain PCC 7120 / SAG 25.82 / UTEX 2576).